The sequence spans 340 residues: Fructose-bisphosphate aldolase (340 aa).

Ser-53 contacts D-glyceraldehyde 3-phosphate. Catalysis depends on Asp-95, which acts as the Proton donor. Residues His-96, Asp-131, Glu-161, and His-212 each coordinate Zn(2+). Gly-213 is a dihydroxyacetone phosphate binding site. His-249 is a Zn(2+) binding site. Residues 250–252 and 271–274 each bind dihydroxyacetone phosphate; these read GGS and NLDT.

Belongs to the class II fructose-bisphosphate aldolase family. Zn(2+) serves as cofactor.

It catalyses the reaction beta-D-fructose 1,6-bisphosphate = D-glyceraldehyde 3-phosphate + dihydroxyacetone phosphate. It participates in carbohydrate degradation; glycolysis; D-glyceraldehyde 3-phosphate and glycerone phosphate from D-glucose: step 4/4. In terms of biological role, catalyzes the aldol condensation of dihydroxyacetone phosphate (DHAP or glycerone-phosphate) with glyceraldehyde 3-phosphate (G3P) to form fructose 1,6-bisphosphate (FBP) in gluconeogenesis and the reverse reaction in glycolysis. This is Fructose-bisphosphate aldolase (fba) from Streptomyces galbus.